The sequence spans 294 residues: MCPHAHPPAKPDHGATTTPERIVHDEKAQLDFSRDMSYGDYLQLDAILNAQKPLSPAHDEMLFIIQHQTSELWMKLMLHELRAAIANVAADELGSAFKMLARVSRIMEQLVHAWDVLATMTPPEYSAMRPYLGASSGFQSYQYRCIEFALGNKNAAMLQPHAHRSDLLAQVQAAYEAPSLYDEALRLLARRGLAVPASHTERDWTQPYLESAAVEQAWLTVYRDPKQYWDLYQLGEELTDLEDAFRLWRFRHVTTVERIIGFKPGTGGTSGVSYLRKMLDVVLFPEIWKLRTDL.

Substrate is bound by residues 63 to 67 (FIIQH), Tyr125, and Arg129. His252 provides a ligand contact to heme. Thr266 lines the substrate pocket.

It belongs to the tryptophan 2,3-dioxygenase family. In terms of assembly, homotetramer. Heme is required as a cofactor.

The catalysed reaction is L-tryptophan + O2 = N-formyl-L-kynurenine. It participates in amino-acid degradation; L-tryptophan degradation via kynurenine pathway; L-kynurenine from L-tryptophan: step 1/2. Heme-dependent dioxygenase that catalyzes the oxidative cleavage of the L-tryptophan (L-Trp) pyrrole ring and converts L-tryptophan to N-formyl-L-kynurenine. Catalyzes the oxidative cleavage of the indole moiety. The protein is Tryptophan 2,3-dioxygenase of Polaromonas sp. (strain JS666 / ATCC BAA-500).